The chain runs to 567 residues: Malate synthase (567 aa).

Arg177 functions as the Proton acceptor in the catalytic mechanism. Catalysis depends on Asp466, which acts as the Proton donor. Residues 565 to 567 (CKL) carry the Microbody targeting signal motif.

The protein belongs to the malate synthase family.

It is found in the glyoxysome. It carries out the reaction glyoxylate + acetyl-CoA + H2O = (S)-malate + CoA + H(+). It participates in carbohydrate metabolism; glyoxylate cycle; (S)-malate from isocitrate: step 2/2. This Oryza sativa subsp. japonica (Rice) protein is Malate synthase.